A 258-amino-acid chain; its full sequence is 5'-nucleotidase SurE (258 aa).

Positions 9, 10, 42, and 96 each coordinate a divalent metal cation.

Belongs to the SurE nucleotidase family. A divalent metal cation serves as cofactor.

Its subcellular location is the cytoplasm. The catalysed reaction is a ribonucleoside 5'-phosphate + H2O = a ribonucleoside + phosphate. Nucleotidase that shows phosphatase activity on nucleoside 5'-monophosphates. The polypeptide is 5'-nucleotidase SurE (Campylobacter jejuni subsp. jejuni serotype O:23/36 (strain 81-176)).